Consider the following 392-residue polypeptide: Autophagy-related protein 21 (392 aa).

WD repeat units lie at residues 200–240 (VHQS…NDEP) and 250–289 (SRPS…TEAD). The L/FRRG motif motif lies at 246 to 250 (FRRGS).

It belongs to the WD repeat PROPPIN family.

Its subcellular location is the cytoplasm. It is found in the membrane. The protein localises to the vacuole membrane. Its function is as follows. Required for cytoplasm to vacuole transport (Cvt) vesicles formation and mitophagy. Involved in binding of phosphatidylethanolamine to ATG8 and in recruitment of ATG8 and ATG5 to the pre-autophagosomal structure. Protects ATG8 from ARG4-mediated cleavage. The polypeptide is Autophagy-related protein 21 (ATG21) (Kluyveromyces lactis (strain ATCC 8585 / CBS 2359 / DSM 70799 / NBRC 1267 / NRRL Y-1140 / WM37) (Yeast)).